The sequence spans 1116 residues: Protein STICHEL-like 1 (1116 aa).

Disordered regions lie at residues 95–138 (RTSS…LEET) and 225–244 (KFLR…NSTP). A compositionally biased stretch (acidic residues) spans 115 to 124 (NDDDDDDDDV). Short sequence motifs (PEST) lie at residues 257-282 (RNPS…FKGR) and 402-422 (KSQD…ESIQ). An ATP-binding site is contributed by 463 to 470 (GPRGTGKT). Cys482, Cys492, Cys495, and Cys498 together coordinate Zn(2+). The stretch at 726 to 760 (EAFLDRRNLTEADLERLKHALKLLSEAEKQLRVST) forms a coiled coil. A disordered region spans residues 777 to 798 (PSPGTTHTGSSRRQSSRATEES). The segment covering 778–793 (SPGTTHTGSSRRQSSR) has biased composition (polar residues).

The protein belongs to the DnaX/STICHEL family.

The protein is Protein STICHEL-like 1 of Arabidopsis thaliana (Mouse-ear cress).